A 480-amino-acid polypeptide reads, in one-letter code: Beta-glucosidase A (480 aa).

The active-site Proton donor is the Glu-177. The Nucleophile role is filled by Glu-378.

Belongs to the glycosyl hydrolase 1 family.

The catalysed reaction is Hydrolysis of terminal, non-reducing beta-D-glucosyl residues with release of beta-D-glucose.. In Enterobacter agglomerans (Erwinia herbicola), this protein is Beta-glucosidase A (bglA).